The following is a 258-amino-acid chain: Putative cysteine-rich repeat secretory protein 16 (258 aa).

Positions 1–30 (MYYSSPTCFVLITIFAVVVTQLIFMRTVSS) are cleaved as a signal peptide. Gnk2-homologous domains are found at residues 37-139 (YLNH…PFDT) and 144-247 (DKDN…LYPF).

This sequence belongs to the cysteine-rich repeat secretory protein family.

The protein resides in the secreted. The sequence is that of Putative cysteine-rich repeat secretory protein 16 (CRRSP16) from Arabidopsis thaliana (Mouse-ear cress).